The sequence spans 416 residues: Major royal jelly protein 8 (416 aa).

The first 16 residues, 1 to 16 (MIRWLLLMYLGITCQG), serve as a signal peptide directing secretion. 8 N-linked (GlcNAc...) asparagine glycosylation sites follow: N24, N58, N93, N115, N158, N175, N196, and N215.

It belongs to the major royal jelly protein family. As to expression, expressed at very low levels in the hypopharyngeal glands of worker honey bees (at protein level). Secreted into bee venom in the sting apparatus (at protein level). Expressed in the spermatheca of adult queen bees (at protein level); expression levels are higher in mated queens than in virgin queens. Along with Mrjp9 expressed at very low levels in the head of worker bees compared to other major royal jelly proteins.

Its subcellular location is the secreted. Functionally, component of bee sting venom. Component of royal jelly, a substance produced in the hypopharyngeal gland containing proteins, free amino acids, fatty acids, sugars and other nutrients, which is fed to developing larvae by worker nurse bees; may be present only at trace levels. All larvae are fed some royal jelly (also known as worker jelly) early in their development but it forms the principal source of nutrition for larvae destined to become queen bees. Produced in the spermatheca of adult queen bees, along with other major royal jelly proteins, where it may act as a nutrient supply for sperm stored by mated queens, or be involved in energy metabolism. The sequence is that of Major royal jelly protein 8 from Apis mellifera (Honeybee).